Here is a 1860-residue protein sequence, read N- to C-terminus: Proprotein convertase subtilisin/kexin type 5 (1860 aa).

A signal peptide spans M1 to T32. The propeptide occupies R33–R114. The Extracellular segment spans residues D115–T1743. The Peptidase S8 domain maps to M134–V453. Active-site charge relay system residues include D171 and H212. Residues N225 and N381 are each glycosylated (N-linked (GlcNAc...) asparagine). S386 functions as the Charge relay system in the catalytic mechanism. Residues T461–Q601 enclose the P/Homo B domain. The Cell attachment site signature appears at R519–D521. FU repeat units follow at residues E630–H680, K683–Q730, K734–F777, G779–F824, Y832–V879, H882–E927, E929–A979, G982–Q1028, Y1032–S1077, E1079–G1121, M1125–E1168, L1177–P1221, S1225–A1272, D1274–A1318, K1320–A1363, S1365–Y1411, T1415–W1461, A1465–A1510, S1514–A1559, T1563–V1610, T1614–R1659, and K1665–P1712. Residues C636 to C1727 are CRM (Cys-rich motif). N-linked (GlcNAc...) asparagine glycosylation is present at N665. 3 N-linked (GlcNAc...) asparagine glycosylation sites follow: N752, N802, and N852. Residues M869–D913 form the PLAC domain. N1014 carries N-linked (GlcNAc...) asparagine glycosylation. N-linked (GlcNAc...) asparagine glycosylation is present at N1191. N1290 is a glycosylation site (N-linked (GlcNAc...) asparagine). N1497 carries an N-linked (GlcNAc...) asparagine glycan. Residues N1685 and N1707 are each glycosylated (N-linked (GlcNAc...) asparagine). Residues A1744–W1764 form a helical membrane-spanning segment. The Cytoplasmic portion of the chain corresponds to K1765 to Q1860. AC stretches follow at residues V1807 to M1826 and Y1838 to Q1860.

The protein belongs to the peptidase S8 family. Expressed in T-lymphocytes.

Its subcellular location is the secreted. It is found in the endomembrane system. Functionally, serine endoprotease that processes various proproteins by cleavage at paired basic amino acids, recognizing the RXXX[KR]R consensus motif. Likely functions in the constitutive and regulated secretory pathways. Plays an essential role in pregnancy establishment by proteolytic activation of a number of important factors such as BMP2, CALD1 and alpha-integrins. This chain is Proprotein convertase subtilisin/kexin type 5 (PCSK5), found in Homo sapiens (Human).